Here is a 213-residue protein sequence, read N- to C-terminus: Ribonuclease HII (213 aa).

Positions 18–213 (GLYAGVDEVG…RPVKERLAKN (196 aa)) constitute an RNase H type-2 domain. A divalent metal cation is bound by residues Asp24, Glu25, and Asp116.

It belongs to the RNase HII family. The cofactor is Mn(2+). Mg(2+) serves as cofactor.

The protein localises to the cytoplasm. The enzyme catalyses Endonucleolytic cleavage to 5'-phosphomonoester.. Its function is as follows. Endonuclease that specifically degrades the RNA of RNA-DNA hybrids. This Shewanella sediminis (strain HAW-EB3) protein is Ribonuclease HII.